Consider the following 205-residue polypeptide: Guanylate kinase (205 aa).

In terms of domain architecture, Guanylate kinase-like spans 18–196 (PKLFTISAPA…AYQVLRSIFI (179 aa)). 25–32 (APAGAGKT) is a binding site for ATP.

This sequence belongs to the guanylate kinase family.

It is found in the cytoplasm. The catalysed reaction is GMP + ATP = GDP + ADP. Its function is as follows. Essential for recycling GMP and indirectly, cGMP. This Chlamydia muridarum (strain MoPn / Nigg) protein is Guanylate kinase (gmk).